The chain runs to 443 residues: Ribosomal protein uS12 methylthiotransferase RimO (443 aa).

Residues 8 to 118 (PKVGFVSLGC…VVNAVHEVVP (111 aa)) enclose the MTTase N-terminal domain. Positions 17, 53, 82, 151, 155, and 158 each coordinate [4Fe-4S] cluster. Residues 137-375 (LTPRHYAYLK…MAHQQAISAA (239 aa)) enclose the Radical SAM core domain. The region spanning 378–443 (QQRIGKEIEV…DEYDMWAEPI (66 aa)) is the TRAM domain.

Belongs to the methylthiotransferase family. RimO subfamily. [4Fe-4S] cluster is required as a cofactor.

Its subcellular location is the cytoplasm. The enzyme catalyses L-aspartate(89)-[ribosomal protein uS12]-hydrogen + (sulfur carrier)-SH + AH2 + 2 S-adenosyl-L-methionine = 3-methylsulfanyl-L-aspartate(89)-[ribosomal protein uS12]-hydrogen + (sulfur carrier)-H + 5'-deoxyadenosine + L-methionine + A + S-adenosyl-L-homocysteine + 2 H(+). Catalyzes the methylthiolation of an aspartic acid residue of ribosomal protein uS12. This Pseudomonas entomophila (strain L48) protein is Ribosomal protein uS12 methylthiotransferase RimO.